The primary structure comprises 1135 residues: uncharacterized protein (1135 aa).

A signal peptide spans 1–28; that stretch reads MALFPRGILIALVLSFVLNLGLVTKIHA. The next 7 membrane-spanning stretches (helical) occupy residues 332–352, 359–379, 393–413, 495–515, 522–542, 555–575, and 700–720; these read IVTA…LLAG, EYIN…GINI, MIQW…NWVM, MLVS…AFMV, MISI…FLFA, MISF…MFAV, and IKNI…MYNF.

It belongs to the TrbL/VirB6 family.

The protein localises to the cell membrane. This is an uncharacterized protein from Rickettsia typhi (strain ATCC VR-144 / Wilmington).